Reading from the N-terminus, the 93-residue chain is Phosphoribosyl-ATP pyrophosphatase (93 aa).

The protein belongs to the PRA-PH family.

Its subcellular location is the cytoplasm. The catalysed reaction is 1-(5-phospho-beta-D-ribosyl)-ATP + H2O = 1-(5-phospho-beta-D-ribosyl)-5'-AMP + diphosphate + H(+). Its pathway is amino-acid biosynthesis; L-histidine biosynthesis; L-histidine from 5-phospho-alpha-D-ribose 1-diphosphate: step 2/9. The polypeptide is Phosphoribosyl-ATP pyrophosphatase (hisE) (Mycobacterium bovis (strain ATCC BAA-935 / AF2122/97)).